The primary structure comprises 1375 residues: DNA-directed RNA polymerase subunit beta (1375 aa).

The protein belongs to the RNA polymerase beta chain family. The RNAP catalytic core consists of 2 alpha, 1 beta, 1 beta' and 1 omega subunit. When a sigma factor is associated with the core the holoenzyme is formed, which can initiate transcription.

It catalyses the reaction RNA(n) + a ribonucleoside 5'-triphosphate = RNA(n+1) + diphosphate. In terms of biological role, DNA-dependent RNA polymerase catalyzes the transcription of DNA into RNA using the four ribonucleoside triphosphates as substrates. This Coxiella burnetii (strain CbuG_Q212) (Coxiella burnetii (strain Q212)) protein is DNA-directed RNA polymerase subunit beta.